Reading from the N-terminus, the 110-residue chain is uncharacterized protein (110 aa).

Positions E16–I46 form a coiled coil. Over residues E85 to E96 the composition is skewed to basic and acidic residues. A disordered region spans residues E85–Q110.

This is an uncharacterized protein from Bacillus subtilis (strain 168).